The primary structure comprises 280 residues: Pantothenate synthetase (280 aa).

An ATP-binding site is contributed by 30-37 (MGYLHEGH). The active-site Proton donor is the histidine 37. Glutamine 61 contacts (R)-pantoate. Residue glutamine 61 participates in beta-alanine binding. 147 to 150 (GQKD) provides a ligand contact to ATP. Glutamine 153 serves as a coordination point for (R)-pantoate. Residues valine 176 and 184 to 187 (MSSR) each bind ATP.

This sequence belongs to the pantothenate synthetase family. Homodimer.

It localises to the cytoplasm. The enzyme catalyses (R)-pantoate + beta-alanine + ATP = (R)-pantothenate + AMP + diphosphate + H(+). Its pathway is cofactor biosynthesis; (R)-pantothenate biosynthesis; (R)-pantothenate from (R)-pantoate and beta-alanine: step 1/1. In terms of biological role, catalyzes the condensation of pantoate with beta-alanine in an ATP-dependent reaction via a pantoyl-adenylate intermediate. The chain is Pantothenate synthetase from Thermotoga neapolitana.